A 617-amino-acid chain; its full sequence is Proline--tRNA ligase (617 aa).

It belongs to the class-II aminoacyl-tRNA synthetase family. ProS type 1 subfamily. Homodimer.

Its subcellular location is the cytoplasm. The enzyme catalyses tRNA(Pro) + L-proline + ATP = L-prolyl-tRNA(Pro) + AMP + diphosphate. Functionally, catalyzes the attachment of proline to tRNA(Pro) in a two-step reaction: proline is first activated by ATP to form Pro-AMP and then transferred to the acceptor end of tRNA(Pro). As ProRS can inadvertently accommodate and process non-cognate amino acids such as alanine and cysteine, to avoid such errors it has two additional distinct editing activities against alanine. One activity is designated as 'pretransfer' editing and involves the tRNA(Pro)-independent hydrolysis of activated Ala-AMP. The other activity is designated 'posttransfer' editing and involves deacylation of mischarged Ala-tRNA(Pro). The misacylated Cys-tRNA(Pro) is not edited by ProRS. The chain is Proline--tRNA ligase from Streptococcus pneumoniae serotype 19F (strain G54).